Consider the following 418-residue polypeptide: Putative ion-transport protein YfeO (418 aa).

12 helical membrane-spanning segments follow: residues 10 to 30, 54 to 74, 99 to 119, 120 to 140, 149 to 169, 186 to 206, 223 to 243, 258 to 278, 300 to 320, 322 to 342, 343 to 363, and 371 to 391; these read LLLS…LIVV, DSPF…GLVI, ALPG…SLGP, EHPI…RLLP, ILAS…AALI, LFAP…FFHP, ILSG…AVWC, VLML…AGPV, DYFL…ASGF, GGRI…LHEH, VPAV…VLVV, and LFMA…CIVM.

The protein belongs to the chloride channel (TC 2.A.49) family.

It is found in the cell membrane. The sequence is that of Putative ion-transport protein YfeO from Escherichia coli O7:K1 (strain IAI39 / ExPEC).